The sequence spans 260 residues: Triosephosphate isomerase (260 aa).

11 to 13 provides a ligand contact to substrate; sequence NWK. H103 acts as the Electrophile in catalysis. E175 (proton acceptor) is an active-site residue. Substrate is bound by residues G181, S220, and 241–242; that span reads GG.

It belongs to the triosephosphate isomerase family. As to quaternary structure, homodimer.

Its subcellular location is the cytoplasm. The enzyme catalyses D-glyceraldehyde 3-phosphate = dihydroxyacetone phosphate. It functions in the pathway carbohydrate biosynthesis; gluconeogenesis. Its pathway is carbohydrate degradation; glycolysis; D-glyceraldehyde 3-phosphate from glycerone phosphate: step 1/1. Functionally, involved in the gluconeogenesis. Catalyzes stereospecifically the conversion of dihydroxyacetone phosphate (DHAP) to D-glyceraldehyde-3-phosphate (G3P). In Shewanella loihica (strain ATCC BAA-1088 / PV-4), this protein is Triosephosphate isomerase.